The primary structure comprises 304 residues: HTH-type transcriptional regulator AdmX (304 aa).

In terms of domain architecture, HTH lysR-type spans 1–58 (MKLRHLEIFYTVMTCGSLSRAAESLNISQPAASKSLKNAELKLGFKLFQRVRGKLLPS). Positions 18–37 (LSRAAESLNISQPAASKSLK) form a DNA-binding region, H-T-H motif.

It belongs to the LysR transcriptional regulatory family.

The protein resides in the cytoplasm. With respect to regulation, admX-mediated transcription is inhibited by indole-3-acetic and indole-3-pyruvic acids. AdmX recognizes and binds the auxin indole-3-acetic acid (IAA), which causes conformational changes in AdmX that result in the inhibition of the expression of the andrimid gene cluster and the suppression of antibiotic production. It also recognizes indole-3-pyruvic acid (IPA), an intermediate of the main IAA biosynthetic pathway in plants and plant beneficial bacteria, which also prevents andrimid synthesis, but to a much lesser extent. Its function is as follows. Positively regulates the biosynthesis of andrimid, a broad-spectrum antibiotic, by activating the expression of the adm biosynthetic gene cluster. It specifically binds to a region within the adm promoter. The sequence is that of HTH-type transcriptional regulator AdmX from Serratia plymuthica.